We begin with the raw amino-acid sequence, 213 residues long: Adenylate kinase (213 aa).

10-15 is an ATP binding site; the sequence is GAGKGT. The NMP stretch occupies residues 30–59; it reads STGDMFRAAMANQTEMGLLAKSYIDKGDLV. Residues Thr-31, Arg-36, 57 to 59, 86 to 89, and Gln-93 each bind AMP; these read DLV and GYPR. Residues 127–160 form an LID region; sequence GRIIHKKTGETFHKIFNPPAGDYDENDYYQREDD. Residues Arg-128 and 137–138 each bind ATP; that span reads TF. 2 residues coordinate AMP: Arg-157 and Arg-168. Gln-196 lines the ATP pocket.

This sequence belongs to the adenylate kinase family. As to quaternary structure, monomer.

The protein resides in the cytoplasm. It catalyses the reaction AMP + ATP = 2 ADP. The protein operates within purine metabolism; AMP biosynthesis via salvage pathway; AMP from ADP: step 1/1. Functionally, catalyzes the reversible transfer of the terminal phosphate group between ATP and AMP. Plays an important role in cellular energy homeostasis and in adenine nucleotide metabolism. In Streptococcus uberis (strain ATCC BAA-854 / 0140J), this protein is Adenylate kinase.